Here is a 517-residue protein sequence, read N- to C-terminus: ATP synthase subunit alpha (517 aa).

174-181 (GDRQTGKT) lines the ATP pocket.

This sequence belongs to the ATPase alpha/beta chains family. In terms of assembly, F-type ATPases have 2 components, CF(1) - the catalytic core - and CF(0) - the membrane proton channel. CF(1) has five subunits: alpha(3), beta(3), gamma(1), delta(1), epsilon(1). CF(0) has three main subunits: a(1), b(2) and c(9-12). The alpha and beta chains form an alternating ring which encloses part of the gamma chain. CF(1) is attached to CF(0) by a central stalk formed by the gamma and epsilon chains, while a peripheral stalk is formed by the delta and b chains.

The protein localises to the cell inner membrane. It catalyses the reaction ATP + H2O + 4 H(+)(in) = ADP + phosphate + 5 H(+)(out). Its function is as follows. Produces ATP from ADP in the presence of a proton gradient across the membrane. The alpha chain is a regulatory subunit. The chain is ATP synthase subunit alpha from Polaromonas sp. (strain JS666 / ATCC BAA-500).